The primary structure comprises 340 residues: Trimethylamine N-oxide transport system ATP-binding protein TmoW (340 aa).

The ABC transporter domain occupies 32–268; the sequence is GRSFDDIRAD…PTTGYVAKFT (237 aa). 64–71 lines the ATP pocket; the sequence is GLSGSGKS.

This sequence belongs to the ABC transporter superfamily. The complex is probably composed of two ATP-binding proteins (TmoW), two transmembrane proteins (TmoV) and a solute-binding protein (TmoX).

The protein resides in the cell inner membrane. It catalyses the reaction a quaternary ammonium(out) + ATP + H2O = a quaternary ammonium(in) + ADP + phosphate + H(+). Its function is as follows. Part of the ABC transporter complex TmoXWV involved in trimethylamine N-oxide (TMAO) import. Responsible for energy coupling to the transport system. Is specific for TMAO and essential for TMAO metabolism. The protein is Trimethylamine N-oxide transport system ATP-binding protein TmoW of Ruegeria pomeroyi (strain ATCC 700808 / DSM 15171 / DSS-3) (Silicibacter pomeroyi).